The sequence spans 276 residues: Shikimate dehydrogenase (NADP(+)) (276 aa).

Shikimate contacts are provided by residues 15-17 (SKS) and threonine 62. The active-site Proton acceptor is lysine 66. Shikimate-binding residues include asparagine 87 and aspartate 103. NADP(+)-binding positions include 127–131 (GAGGA), 151–156 (NRTLSK), and methionine 215. Tyrosine 217 provides a ligand contact to shikimate. Glycine 239 contributes to the NADP(+) binding site.

Belongs to the shikimate dehydrogenase family. As to quaternary structure, homodimer.

The catalysed reaction is shikimate + NADP(+) = 3-dehydroshikimate + NADPH + H(+). Its pathway is metabolic intermediate biosynthesis; chorismate biosynthesis; chorismate from D-erythrose 4-phosphate and phosphoenolpyruvate: step 4/7. Its function is as follows. Involved in the biosynthesis of the chorismate, which leads to the biosynthesis of aromatic amino acids. Catalyzes the reversible NADPH linked reduction of 3-dehydroshikimate (DHSA) to yield shikimate (SA). In Cellvibrio japonicus (strain Ueda107) (Pseudomonas fluorescens subsp. cellulosa), this protein is Shikimate dehydrogenase (NADP(+)).